A 317-amino-acid chain; its full sequence is MRSYSLIAPAKINLYLEIIGDRPDGYHELAMILQSIGLSDQIDVRSISTDSIRVHCNHPQVPTDKSNLAYRAAELMVRQFPEAFAKYGGVEITVNKQIPVAAGLAGGSTNAAAVLVGIDLLWKLGLTQSELEELGGTLGSDVPFCVAGGTAIATGRGEQLSPLPSLDNIYIVLGKYRSLEVSTPWAYKTYRQQFGHSYIIDTDNLAARASAVHSGAIVKAILHKDTREIAQKLHNDLERVVLPAYPQVLHLREVFANQEGVLGTMMSGSGPTVFALFESQQQAELVLQQVREAIIDEDLELFVTRTITHGIKVTSSV.

The active site involves K11. 99–109 is a binding site for ATP; that stretch reads PVAAGLAGGST. The active site involves D141.

This sequence belongs to the GHMP kinase family. IspE subfamily.

It carries out the reaction 4-CDP-2-C-methyl-D-erythritol + ATP = 4-CDP-2-C-methyl-D-erythritol 2-phosphate + ADP + H(+). Its pathway is isoprenoid biosynthesis; isopentenyl diphosphate biosynthesis via DXP pathway; isopentenyl diphosphate from 1-deoxy-D-xylulose 5-phosphate: step 3/6. Functionally, catalyzes the phosphorylation of the position 2 hydroxy group of 4-diphosphocytidyl-2C-methyl-D-erythritol. The sequence is that of 4-diphosphocytidyl-2-C-methyl-D-erythritol kinase from Nostoc punctiforme (strain ATCC 29133 / PCC 73102).